A 100-amino-acid polypeptide reads, in one-letter code: Nucleoid-associated protein RoseRS_1534 (100 aa).

It belongs to the YbaB/EbfC family. As to quaternary structure, homodimer.

Its subcellular location is the cytoplasm. It is found in the nucleoid. Its function is as follows. Binds to DNA and alters its conformation. May be involved in regulation of gene expression, nucleoid organization and DNA protection. The chain is Nucleoid-associated protein RoseRS_1534 from Roseiflexus sp. (strain RS-1).